The sequence spans 363 residues: p21-activated protein kinase-interacting protein 1-like (363 aa).

5 WD repeats span residues 38-75 (AHTA…EHGA), 78-116 (HHNG…CQQT), 119-158 (AHKG…SAFI), 200-238 (NNPK…CVCE), and 241-282 (AHEN…VQTS). Residues 309–363 (KEKSNTAVTASAVKDCDRPKKKKAQNETTDKEASETQVVHKKRKPETKQKKKKPS) are disordered. Over residues 322 to 342 (KDCDRPKKKKAQNETTDKEAS) the composition is skewed to basic and acidic residues. The span at 347–363 (VHKKRKPETKQKKKKPS) shows a compositional bias: basic residues.

The protein resides in the nucleus. It localises to the nucleolus. Its function is as follows. Negatively regulates the PAK1 kinase. PAK1 is a member of the PAK kinase family, which has been shown to play a positive role in the regulation of signaling pathways involving MAPK8 and RELA. PAK1 exists as an inactive homodimer, which is activated by binding of small GTPases such as CDC42 to an N-terminal regulatory domain. PAK1IP1 also binds to the N-terminus of PAK1, and inhibits the specific activation of PAK1 by CDC42. May be involved in ribosomal large subunit assembly. The sequence is that of p21-activated protein kinase-interacting protein 1-like (pak1ip1) from Xenopus laevis (African clawed frog).